A 105-amino-acid chain; its full sequence is Protein RALF-like 21 (105 aa).

A signal peptide spans 1–30 (MSNMKITNRFMLVATFIACVFISSMNMTVG). 2 disulfide bridges follow: C44–C53 and C67–C73.

It belongs to the plant rapid alkalinization factor (RALF) family. In terms of tissue distribution, expressed in seeds and rosettes.

Its subcellular location is the secreted. Cell signaling peptide that may regulate plant stress, growth, and development. Mediates a rapid alkalinization of extracellular space by mediating a transient increase in the cytoplasmic Ca(2+) concentration leading to a calcium-dependent signaling events through a cell surface receptor and a concomitant activation of some intracellular mitogen-activated protein kinases. The protein is Protein RALF-like 21 (RALFL21) of Arabidopsis thaliana (Mouse-ear cress).